The following is a 95-amino-acid chain: MTFRPLHDRVVVKRLESEEKTKGGIIIPDSAKEKPQEGEIIAVGPGGRDESGKLIPLDVKAGDKILFGKWSGTEVKIDGQDLLIMKESDILGVVG.

It belongs to the GroES chaperonin family. Heptamer of 7 subunits arranged in a ring. Interacts with the chaperonin GroEL.

Its subcellular location is the cytoplasm. In terms of biological role, together with the chaperonin GroEL, plays an essential role in assisting protein folding. The GroEL-GroES system forms a nano-cage that allows encapsulation of the non-native substrate proteins and provides a physical environment optimized to promote and accelerate protein folding. GroES binds to the apical surface of the GroEL ring, thereby capping the opening of the GroEL channel. The polypeptide is Co-chaperonin GroES (Beijerinckia indica subsp. indica (strain ATCC 9039 / DSM 1715 / NCIMB 8712)).